The following is a 371-amino-acid chain: Aminomethyltransferase (371 aa).

This sequence belongs to the GcvT family. The glycine cleavage system is composed of four proteins: P, T, L and H.

The enzyme catalyses N(6)-[(R)-S(8)-aminomethyldihydrolipoyl]-L-lysyl-[protein] + (6S)-5,6,7,8-tetrahydrofolate = N(6)-[(R)-dihydrolipoyl]-L-lysyl-[protein] + (6R)-5,10-methylene-5,6,7,8-tetrahydrofolate + NH4(+). The glycine cleavage system catalyzes the degradation of glycine. The protein is Aminomethyltransferase of Leptospira borgpetersenii serovar Hardjo-bovis (strain JB197).